Here is a 547-residue protein sequence, read N- to C-terminus: Chaperonin GroEL 1 (547 aa).

ATP is bound by residues 30–33 (TLGP), Lys51, 87–91 (DGTTT), Gly415, and Asp495.

The protein belongs to the chaperonin (HSP60) family. In terms of assembly, forms a cylinder of 14 subunits composed of two heptameric rings stacked back-to-back. Interacts with the co-chaperonin GroES.

The protein localises to the cytoplasm. The enzyme catalyses ATP + H2O + a folded polypeptide = ADP + phosphate + an unfolded polypeptide.. Together with its co-chaperonin GroES, plays an essential role in assisting protein folding. The GroEL-GroES system forms a nano-cage that allows encapsulation of the non-native substrate proteins and provides a physical environment optimized to promote and accelerate protein folding. This is Chaperonin GroEL 1 from Azorhizobium caulinodans (strain ATCC 43989 / DSM 5975 / JCM 20966 / LMG 6465 / NBRC 14845 / NCIMB 13405 / ORS 571).